A 504-amino-acid chain; its full sequence is MEEFQVYLELNRSRRHDFLYPLIFREYIYALAHDHGLNKSMIFLENQGYGNKFSSLIVKRLIIRMDQQNHLIISANDSNQNPFFGHKKNLYSQMISAGFAVIVEIPFSLRLVSYSQGEEVAKSHNLQSIHSIFPFLEDKFSHLNYVLDVLIPYPIHLEILVQALRYWVKDASSLHLLRFSLYEYCNLKSFITPKKSISIFNPRLFFFLYNSHACEYESIFLFLRNQSSHLRSTSSGVFLERIYFYGKIDYLVEVFSNDFQNNLWLFKDPFTHFIRYQGKAILASKDTSLLMNKWKYYFVDLWQYYFYMWSQSGRFRINQLSKYSLDFLGYLSSVRLNPSVVRSQMLENSFIIDNAMKKLDTRIPIISLIGSLSKAKFCNTLGHPISKPTWADSSDSDIIDRFVRICRNLSHYHSGSSKKKSLYRIKYILRFSCVKTLARKHKSTVRAFLKRLGSEFLEEFFTETEEEHFFSLIFPRVFFTSRKLYRGRIWYLDIICINALVNHE.

It belongs to the intron maturase 2 family. MatK subfamily.

The protein resides in the plastid. The protein localises to the chloroplast. Usually encoded in the trnK tRNA gene intron. Probably assists in splicing its own and other chloroplast group II introns. The chain is Maturase K from Pachira aquatica (Guiana chestnut).